The sequence spans 459 residues: Ribulose bisphosphate carboxylase (459 aa).

N111 contacts substrate. Residue K166 is the Proton acceptor of the active site. K168 provides a ligand contact to substrate. Residues K191, D193, and E194 each coordinate Mg(2+). K191 is subject to N6-carboxylysine. H287 acts as the Proton acceptor in catalysis. The substrate site is built by R288, H321, and S368.

Belongs to the RuBisCO large chain family. Type II subfamily. Homodimer. The cofactor is Mg(2+).

It carries out the reaction 2 (2R)-3-phosphoglycerate + 2 H(+) = D-ribulose 1,5-bisphosphate + CO2 + H2O. The catalysed reaction is D-ribulose 1,5-bisphosphate + O2 = 2-phosphoglycolate + (2R)-3-phosphoglycerate + 2 H(+). Functionally, ruBisCO catalyzes two reactions: the carboxylation of D-ribulose 1,5-bisphosphate, the primary event in carbon dioxide fixation, as well as the oxidative fragmentation of the pentose substrate. Both reactions occur simultaneously and in competition at the same active site. This is Ribulose bisphosphate carboxylase from Dechloromonas aromatica (strain RCB).